Here is a 222-residue protein sequence, read N- to C-terminus: uncharacterized protein (222 aa).

N4, N75, N84, N104, N170, and N175 each carry an N-linked (GlcNAc...) asparagine; by host glycan. A helical membrane pass occupies residues 200–220 (LIIIIGIVIILLLIIVMIKTV).

It localises to the membrane. This is an uncharacterized protein from Acanthamoeba polyphaga (Amoeba).